A 347-amino-acid chain; its full sequence is Phosphoribosylformylglycinamidine cyclo-ligase (347 aa).

Belongs to the AIR synthase family.

The protein resides in the cytoplasm. The enzyme catalyses 2-formamido-N(1)-(5-O-phospho-beta-D-ribosyl)acetamidine + ATP = 5-amino-1-(5-phospho-beta-D-ribosyl)imidazole + ADP + phosphate + H(+). The protein operates within purine metabolism; IMP biosynthesis via de novo pathway; 5-amino-1-(5-phospho-D-ribosyl)imidazole from N(2)-formyl-N(1)-(5-phospho-D-ribosyl)glycinamide: step 2/2. The chain is Phosphoribosylformylglycinamidine cyclo-ligase from Prochlorococcus marinus (strain MIT 9215).